Consider the following 301-residue polypeptide: tRNA uridine(34) hydroxylase (301 aa).

One can recognise a Rhodanese domain in the interval 121-215 (RSDDVVLIDT…YLEEVPAENS (95 aa)). Residue Cys175 is the Cysteine persulfide intermediate of the active site.

Belongs to the TrhO family.

It carries out the reaction uridine(34) in tRNA + AH2 + O2 = 5-hydroxyuridine(34) in tRNA + A + H2O. Its function is as follows. Catalyzes oxygen-dependent 5-hydroxyuridine (ho5U) modification at position 34 in tRNAs. The protein is tRNA uridine(34) hydroxylase of Ruegeria pomeroyi (strain ATCC 700808 / DSM 15171 / DSS-3) (Silicibacter pomeroyi).